The chain runs to 333 residues: Transaldolase (333 aa).

K135 (schiff-base intermediate with substrate) is an active-site residue.

The protein belongs to the transaldolase family. Type 1 subfamily. In terms of assembly, homodimer.

It is found in the cytoplasm. It carries out the reaction D-sedoheptulose 7-phosphate + D-glyceraldehyde 3-phosphate = D-erythrose 4-phosphate + beta-D-fructose 6-phosphate. Its pathway is carbohydrate degradation; pentose phosphate pathway; D-glyceraldehyde 3-phosphate and beta-D-fructose 6-phosphate from D-ribose 5-phosphate and D-xylulose 5-phosphate (non-oxidative stage): step 2/3. Transaldolase is important for the balance of metabolites in the pentose-phosphate pathway. This Prochlorococcus marinus (strain MIT 9301) protein is Transaldolase.